A 171-amino-acid polypeptide reads, in one-letter code: Sec-independent protein translocase protein TatB (171 aa).

A helical transmembrane segment spans residues 2-22 (FDGIGFMELLLIGVLGLVVLG). Residues 69–171 (SKGLSNLSPE…DTRSNPKANG (103 aa)) form a disordered region. The span at 88 to 97 (QAAQSVNRPY) shows a compositional bias: polar residues. Composition is skewed to low complexity over residues 114 to 130 (HSPV…HTSP) and 138 to 158 (PTAT…SEPS). Over residues 160–171 (GADTRSNPKANG) the composition is skewed to polar residues.

Belongs to the TatB family. In terms of assembly, the Tat system comprises two distinct complexes: a TatABC complex, containing multiple copies of TatA, TatB and TatC subunits, and a separate TatA complex, containing only TatA subunits. Substrates initially bind to the TatABC complex, which probably triggers association of the separate TatA complex to form the active translocon.

Its subcellular location is the cell inner membrane. Its function is as follows. Part of the twin-arginine translocation (Tat) system that transports large folded proteins containing a characteristic twin-arginine motif in their signal peptide across membranes. Together with TatC, TatB is part of a receptor directly interacting with Tat signal peptides. TatB may form an oligomeric binding site that transiently accommodates folded Tat precursor proteins before their translocation. This chain is Sec-independent protein translocase protein TatB, found in Shewanella baltica (strain OS185).